A 635-amino-acid chain; its full sequence is MLQGRREAKKSYALFSSTFFFFFICFLSSSSAELTDKGVNFEVVALIGIKSSLTDPHGVLMNWDDTAVDPCSWNMITCSDGFVIRLEAPSQNLSGTLSSSIGNLTNLQTVLLQNNYITGNIPHEIGKLMKLKTLDLSTNNFTGQIPFTLSYSKNLQYLRVNNNSLTGTIPSSLANMTQLTFLDLSYNNLSGPVPRSLAKTFNVMGNSQICPTGTEKDCNGTQPKPMSITLNSSQNKSSDGGTKNRKIAVVFGVSLTCVCLLIIGFGFLLWWRRRHNKQVLFFDINEQNKEEMCLGNLRRFNFKELQSATSNFSSKNLVGKGGFGNVYKGCLHDGSIIAVKRLKDINNGGGEVQFQTELEMISLAVHRNLLRLYGFCTTSSERLLVYPYMSNGSVASRLKAKPVLDWGTRKRIALGAGRGLLYLHEQCDPKIIHRDVKAANILLDDYFEAVVGDFGLAKLLDHEESHVTTAVRGTVGHIAPEYLSTGQSSEKTDVFGFGILLLELITGLRALEFGKAANQRGAILDWVKKLQQEKKLEQIVDKDLKSNYDRIEVEEMVQVALLCTQYLPIHRPKMSEVVRMLEGDGLVEKWEASSQRAETNRSYSKPNEFSSSERYSDLTDDSSVLVQAMELSGPR.

The signal sequence occupies residues 1 to 32 (MLQGRREAKKSYALFSSTFFFFFICFLSSSSA). Over 33–248 (ELTDKGVNFE…DGGTKNRKIA (216 aa)) the chain is Extracellular. 2 N-linked (GlcNAc...) asparagine glycosylation sites follow: Asn-92 and Asn-103. LRR repeat units lie at residues 104 to 128 (LTNLQTVLLQNNYITGNIPHEIGKL), 129 to 153 (MKLKTLDLSTNNFTGQIPFTLSYSK), 155 to 176 (LQYLRVNNNSLTGTIPSSLANM), and 177 to 200 (TQLTFLDLSYNNLSGPVPRSLAKT). 7 N-linked (GlcNAc...) asparagine glycosylation sites follow: Asn-140, Asn-162, Asn-175, Asn-188, Asn-219, Asn-231, and Asn-235. Positions 214–242 (TEKDCNGTQPKPMSITLNSSQNKSSDGGT) are disordered. Over residues 219–241 (NGTQPKPMSITLNSSQNKSSDGG) the composition is skewed to polar residues. Residues 249 to 269 (VVFGVSLTCVCLLIIGFGFLL) form a helical membrane-spanning segment. Residues 270–635 (WWRRRHNKQV…VQAMELSGPR (366 aa)) lie on the Cytoplasmic side of the membrane. A Phosphothreonine modification is found at Thr-309. In terms of domain architecture, Protein kinase spans 312 to 591 (FSSKNLVGKG…EGDGLVEKWE (280 aa)). ATP-binding positions include 318–326 (VGKGGFGNV) and Lys-340. A phosphoserine mark is found at Ser-393 and Ser-396. At Thr-408 the chain carries Phosphothreonine. The segment at 422-502 (YLHEQCDPKI…DVFGFGILLL (81 aa)) is interaction with geminivirus NSP protein. The Proton acceptor role is filled by Asp-435. 3 positions are modified to phosphothreonine: Thr-468, Thr-469, and Thr-474. Residue Tyr-482 is modified to Phosphotyrosine. Ser-484 carries the post-translational modification Phosphoserine. Phosphothreonine is present on Thr-485. Ser-489 is subject to Phosphoserine. Thr-564 is modified (phosphothreonine). Over residues 593–613 (SSQRAETNRSYSKPNEFSSSE) the composition is skewed to polar residues. The disordered stretch occupies residues 593–621 (SSQRAETNRSYSKPNEFSSSERYSDLTDD).

It belongs to the protein kinase superfamily. Ser/Thr protein kinase family. In terms of assembly, oligomer. Interacts with geminivirus nuclear shuttle protein (NSP). Post-translationally, autophosphorylated. Expressed in flowers and roots.

Its subcellular location is the cell membrane. It carries out the reaction L-seryl-[protein] + ATP = O-phospho-L-seryl-[protein] + ADP + H(+). The catalysed reaction is L-threonyl-[protein] + ATP = O-phospho-L-threonyl-[protein] + ADP + H(+). Its activity is regulated as follows. Inhibited by the viral nuclear shuttle protein (NSP) that binds to the region required for oligomerization. Functionally, involved in defense response to geminivirus infection. Phosphorylates RPL10A in vitro. The protein is Protein NSP-INTERACTING KINASE 2 (NIK2) of Arabidopsis thaliana (Mouse-ear cress).